The primary structure comprises 781 residues: LPS-assembly protein LptD (781 aa).

A signal peptide spans 1–24 (MKKNYYTVLSLSILTALYSTSSQA).

Belongs to the LptD family. As to quaternary structure, component of the lipopolysaccharide transport and assembly complex. Interacts with LptE and LptA.

It is found in the cell outer membrane. Functionally, together with LptE, is involved in the assembly of lipopolysaccharide (LPS) at the surface of the outer membrane. The protein is LPS-assembly protein LptD of Histophilus somni (strain 129Pt) (Haemophilus somnus).